Reading from the N-terminus, the 145-residue chain is Oocyte zinc finger protein XlCOF8.4I (145 aa).

The interval 1 to 25 (HKREADFCSKGNLTNPEISPVEHYP) is disordered. A C2H2-type zinc finger spans residues 123–145 (LSCSECGKCFSTYHVLARHQKTH).

Belongs to the krueppel C2H2-type zinc-finger protein family.

The protein resides in the nucleus. Its function is as follows. May be involved in transcriptional regulation. The polypeptide is Oocyte zinc finger protein XlCOF8.4I (Xenopus laevis (African clawed frog)).